The following is a 382-amino-acid chain: Na(+)/H(+) antiporter NhaA 2 (382 aa).

11 consecutive transmembrane segments (helical) span residues 7–27 (MALSETFPGILLIFFTFLALL), 58–78 (LDLWINDGLIAIFFLCIGLEL), 94–114 (SLPIFGALGGMITPALIFAAI), 124–144 (GWAIPTATDIAFAVGILMLLG), 153–173 (LFLLSLAIFDDLGAIVIIALF), 178–198 (LSALAIIICLFCIFALLLLNY), 199–219 (YHITHLSLYVLVGVVLWIAML), 255–275 (NPWVVYFILPLFAFANAGIDI), 291–311 (IILGLFLGKQLGVFIFCFIAI), 327–347 (FYGICILTGIGFTMSLFIDGL), and 361–381 (LAILIASFLSAIVGFIYLKIV).

The protein belongs to the NhaA Na(+)/H(+) (TC 2.A.33) antiporter family.

It is found in the cell inner membrane. The enzyme catalyses Na(+)(in) + 2 H(+)(out) = Na(+)(out) + 2 H(+)(in). In terms of biological role, na(+)/H(+) antiporter that extrudes sodium in exchange for external protons. This chain is Na(+)/H(+) antiporter NhaA 2, found in Campylobacter jejuni subsp. doylei (strain ATCC BAA-1458 / RM4099 / 269.97).